Here is a 234-residue protein sequence, read N- to C-terminus: Rhodanese-like domain-containing protein 9, chloroplastic (234 aa).

A chloroplast-targeting transit peptide spans methionine 1 to alanine 47. Residues alanine 62–glycine 185 enclose the Rhodanese domain. The active-site Cysteine persulfide intermediate is cysteine 145. Residues isoleucine 204–phenylalanine 222 traverse the membrane as a helical segment.

It is found in the plastid. The protein resides in the chloroplast. It localises to the membrane. The sequence is that of Rhodanese-like domain-containing protein 9, chloroplastic (STR9) from Arabidopsis thaliana (Mouse-ear cress).